Reading from the N-terminus, the 421-residue chain is 4-methylaminobutanoate oxidase (methylamine-forming) (421 aa).

Glutamate 31, arginine 33, arginine 39, and glutamate 379 together coordinate FAD.

It belongs to the flavin monoamine oxidase family. In terms of assembly, monomer. The cofactor is FAD.

The enzyme catalyses 4-(methylamino)butanoate + O2 + H2O = succinate semialdehyde + methylamine + H2O2. Its pathway is alkaloid degradation; nicotine degradation. Its function is as follows. Catalyzes the removal of methylamine from 4-methylaminobutanoate with the formation of succinate semialdehyde. Is involved in the catabolism of 4-methylaminobutanoate produced from nicotine. Has a very weak monoamine oxidase activity with 4-aminobutanoate. Cannot use spermidine, spermine, sarcosine, dimethylglycine, glycine, choline, betaine, alpha-methylamino isobutyrate, methylamine propionitrile and methylamino propylamine as substrate. This is 4-methylaminobutanoate oxidase (methylamine-forming) (mao) from Paenarthrobacter nicotinovorans (Arthrobacter nicotinovorans).